The chain runs to 1201 residues: DNA-directed RNA polymerase subunit beta' (1201 aa).

Zn(2+)-binding residues include cysteine 60, cysteine 62, cysteine 75, and cysteine 78. 3 residues coordinate Mg(2+): aspartate 449, aspartate 451, and aspartate 453. Positions 818, 892, 899, and 902 each coordinate Zn(2+).

It belongs to the RNA polymerase beta' chain family. The RNAP catalytic core consists of 2 alpha, 1 beta, 1 beta' and 1 omega subunit. When a sigma factor is associated with the core the holoenzyme is formed, which can initiate transcription. Requires Mg(2+) as cofactor. It depends on Zn(2+) as a cofactor.

The enzyme catalyses RNA(n) + a ribonucleoside 5'-triphosphate = RNA(n+1) + diphosphate. In terms of biological role, DNA-dependent RNA polymerase catalyzes the transcription of DNA into RNA using the four ribonucleoside triphosphates as substrates. In Listeria welshimeri serovar 6b (strain ATCC 35897 / DSM 20650 / CCUG 15529 / CIP 8149 / NCTC 11857 / SLCC 5334 / V8), this protein is DNA-directed RNA polymerase subunit beta'.